A 198-amino-acid chain; its full sequence is Imidazole glycerol phosphate synthase subunit HisH (198 aa).

Residues 2-198 form the Glutamine amidotransferase type-1 domain; sequence KALLIDYGSG…ALARRYFEVL (197 aa). Cys80 (nucleophile) is an active-site residue. Catalysis depends on residues His176 and Glu178.

In terms of assembly, heterodimer of HisH and HisF.

Its subcellular location is the cytoplasm. It catalyses the reaction 5-[(5-phospho-1-deoxy-D-ribulos-1-ylimino)methylamino]-1-(5-phospho-beta-D-ribosyl)imidazole-4-carboxamide + L-glutamine = D-erythro-1-(imidazol-4-yl)glycerol 3-phosphate + 5-amino-1-(5-phospho-beta-D-ribosyl)imidazole-4-carboxamide + L-glutamate + H(+). The catalysed reaction is L-glutamine + H2O = L-glutamate + NH4(+). The protein operates within amino-acid biosynthesis; L-histidine biosynthesis; L-histidine from 5-phospho-alpha-D-ribose 1-diphosphate: step 5/9. IGPS catalyzes the conversion of PRFAR and glutamine to IGP, AICAR and glutamate. The HisH subunit catalyzes the hydrolysis of glutamine to glutamate and ammonia as part of the synthesis of IGP and AICAR. The resulting ammonia molecule is channeled to the active site of HisF. The sequence is that of Imidazole glycerol phosphate synthase subunit HisH from Thermus thermophilus (strain ATCC BAA-163 / DSM 7039 / HB27).